The sequence spans 181 residues: Large ribosomal subunit protein uL5 (181 aa).

It belongs to the universal ribosomal protein uL5 family. In terms of assembly, part of the 50S ribosomal subunit; part of the 5S rRNA/L5/L18/L25 subcomplex. Contacts the 5S rRNA and the P site tRNA. Forms a bridge to the 30S subunit in the 70S ribosome.

Its function is as follows. This is one of the proteins that bind and probably mediate the attachment of the 5S RNA into the large ribosomal subunit, where it forms part of the central protuberance. In the 70S ribosome it contacts protein S13 of the 30S subunit (bridge B1b), connecting the 2 subunits; this bridge is implicated in subunit movement. Contacts the P site tRNA; the 5S rRNA and some of its associated proteins might help stabilize positioning of ribosome-bound tRNAs. This is Large ribosomal subunit protein uL5 from Aster yellows witches'-broom phytoplasma (strain AYWB).